Here is a 787-residue protein sequence, read N- to C-terminus: GPI ethanolamine phosphate transferase 2 (787 aa).

Residues Asn-33, Asn-185, and Asn-397 are each glycosylated (N-linked (GlcNAc...) asparagine). The next 3 helical transmembrane spans lie at 400–420 (FLTYGTTLMIIGTLIVTVWNF), 426–446 (YIEHVGTSVLLGISMFASSFI), and 455–475 (WITISVLLLMQISNGKKLVVL). An N-linked (GlcNAc...) asparagine glycan is attached at Asn-485. Transmembrane regions (helical) follow at residues 504–524 (HTSVLWWLNVVTFLSVGFPFL) and 536–556 (LLSVSFLALSSITYKICFAIV). The N-linked (GlcNAc...) asparagine glycan is linked to Asn-581. A helical transmembrane segment spans residues 591–611 (LVPIARIFFQICGVSIIILLF). Asn-617 carries an N-linked (GlcNAc...) asparagine glycan. A helical membrane pass occupies residues 629 to 651 (VIKFVLLLQTSSANIPLFLIFEI). The N-linked (GlcNAc...) asparagine glycan is linked to Asn-669. 4 helical membrane-spanning segments follow: residues 671-693 (TFFQFGGTNSIATVNLTNAYNGV), 699-719 (IYVVGVLMFLSNYAPSIYWAL), 740-760 (GTCLMIACIALRYHLFIWSVF), and 767-787 (YAAWSLYNVVMDFAITLLGVL).

This sequence belongs to the PIGG/PIGN/PIGO family. PIGG subfamily.

It localises to the endoplasmic reticulum membrane. It functions in the pathway glycolipid biosynthesis; glycosylphosphatidylinositol-anchor biosynthesis. In terms of biological role, ethanolamine phosphate transferase involved in glycosylphosphatidylinositol-anchor biosynthesis. Transfers ethanolamine phosphate to the GPI second mannose. The polypeptide is GPI ethanolamine phosphate transferase 2 (LAS21) (Kluyveromyces lactis (strain ATCC 8585 / CBS 2359 / DSM 70799 / NBRC 1267 / NRRL Y-1140 / WM37) (Yeast)).